Here is a 409-residue protein sequence, read N- to C-terminus: Nitrogen permease regulator 2 homolog (409 aa).

It belongs to the NPR2 family.

The protein localises to the cytoplasm. The protein resides in the nucleus. Its function is as follows. Mediates inactivation of the TORC1 complex in response to amino acid starvation. Post-transcriptional regulator of nitrogen permeases. The chain is Nitrogen permease regulator 2 homolog from Schizosaccharomyces pombe (strain 972 / ATCC 24843) (Fission yeast).